The following is a 214-amino-acid chain: Orotate phosphoribosyltransferase (214 aa).

Residue Lys26 coordinates 5-phospho-alpha-D-ribose 1-diphosphate. Orotate is bound at residue 34-35 (FF). Residues 72-73 (YK), Arg99, Lys100, Lys103, His105, and 124-132 (DDVITAGTA) each bind 5-phospho-alpha-D-ribose 1-diphosphate. The orotate site is built by Thr128 and Arg156.

Belongs to the purine/pyrimidine phosphoribosyltransferase family. PyrE subfamily. As to quaternary structure, homodimer. Mg(2+) serves as cofactor.

The catalysed reaction is orotidine 5'-phosphate + diphosphate = orotate + 5-phospho-alpha-D-ribose 1-diphosphate. It functions in the pathway pyrimidine metabolism; UMP biosynthesis via de novo pathway; UMP from orotate: step 1/2. Its function is as follows. Catalyzes the transfer of a ribosyl phosphate group from 5-phosphoribose 1-diphosphate to orotate, leading to the formation of orotidine monophosphate (OMP). The sequence is that of Orotate phosphoribosyltransferase from Mannheimia succiniciproducens (strain KCTC 0769BP / MBEL55E).